A 303-amino-acid chain; its full sequence is Recombination-associated protein RdgC (303 aa).

The protein belongs to the RdgC family.

The protein resides in the cytoplasm. It localises to the nucleoid. In terms of biological role, may be involved in recombination. In Shewanella frigidimarina (strain NCIMB 400), this protein is Recombination-associated protein RdgC.